The following is a 571-amino-acid chain: Urease subunit alpha (571 aa).

A Urease domain is found at 134–571 (GAIDTHIHFI…LPMAQRYFLF (438 aa)). 3 residues coordinate Ni(2+): histidine 139, histidine 141, and lysine 222. Lysine 222 is subject to N6-carboxylysine. Substrate is bound at residue histidine 224. Residues histidine 251 and histidine 277 each coordinate Ni(2+). Catalysis depends on histidine 325, which acts as the Proton donor. Aspartate 365 lines the Ni(2+) pocket.

The protein belongs to the metallo-dependent hydrolases superfamily. Urease alpha subunit family. As to quaternary structure, heterotrimer of UreA (gamma), UreB (beta) and UreC (alpha) subunits. Three heterotrimers associate to form the active enzyme. Ni cation is required as a cofactor. Post-translationally, carboxylation allows a single lysine to coordinate two nickel ions.

Its subcellular location is the cytoplasm. The enzyme catalyses urea + 2 H2O + H(+) = hydrogencarbonate + 2 NH4(+). Its pathway is nitrogen metabolism; urea degradation; CO(2) and NH(3) from urea (urease route): step 1/1. This Bordetella pertussis (strain Tohama I / ATCC BAA-589 / NCTC 13251) protein is Urease subunit alpha.